The following is a 763-amino-acid chain: Long-chain-fatty-acid--CoA ligase ACSBG2 (763 aa).

Positions 47–78 are disordered; it reads CSMKPADDPKTERSQMNKTGLASSSRPASNVW. Over residues 51-61 the composition is skewed to basic and acidic residues; the sequence is PADDPKTERSQ. A compositionally biased stretch (polar residues) spans 62-78; the sequence is MNKTGLASSSRPASNVW. Residues 281 to 289, 472 to 477, D550, R565, and K678 each bind ATP; these read TSGTTGQPK and ELYGMS.

Belongs to the ATP-dependent AMP-binding enzyme family. Bubblegum subfamily.

It localises to the cytoplasm. It catalyses the reaction a long-chain fatty acid + ATP + CoA = a long-chain fatty acyl-CoA + AMP + diphosphate. It carries out the reaction (5Z,8Z,11Z,14Z)-eicosatetraenoate + ATP + CoA = (5Z,8Z,11Z,14Z)-eicosatetraenoyl-CoA + AMP + diphosphate. The catalysed reaction is hexadecanoate + ATP + CoA = hexadecanoyl-CoA + AMP + diphosphate. The enzyme catalyses (9Z)-octadecenoate + ATP + CoA = (9Z)-octadecenoyl-CoA + AMP + diphosphate. It catalyses the reaction (9Z,12Z)-octadecadienoate + ATP + CoA = (9Z,12Z)-octadecadienoyl-CoA + AMP + diphosphate. It carries out the reaction tetracosanoate + ATP + CoA = tetracosanoyl-CoA + AMP + diphosphate. Its function is as follows. Mediates activation of long-chain fatty acids for both synthesis of cellular lipids, and degradation via beta-oxidation. Catalyzes the conversion of fatty acids such as long chain and very long-chain fatty acids to their active form acyl-CoAs for both synthesis of cellular lipids, and degradation via beta-oxidation. Can activate diverse saturated, monosaturated and polyunsaturated fatty acids. The chain is Long-chain-fatty-acid--CoA ligase ACSBG2 from Gallus gallus (Chicken).